The chain runs to 142 residues: UPF0102 protein Bcep1808_0248 (142 aa).

Belongs to the UPF0102 family.

The chain is UPF0102 protein Bcep1808_0248 from Burkholderia vietnamiensis (strain G4 / LMG 22486) (Burkholderia cepacia (strain R1808)).